Consider the following 63-residue polypeptide: MVHEYDNTLKVCLVRSLIGVPSRHRLSVRALGLRKVSDMRKVNDTPQVRGLIKKVHYLVRIQD.

Belongs to the universal ribosomal protein uL30 family. Part of the 50S ribosomal subunit.

This Xylella fastidiosa (strain 9a5c) protein is Large ribosomal subunit protein uL30.